A 384-amino-acid chain; its full sequence is Proteinase K (384 aa).

Residues 1–15 form the signal peptide; it reads MRLSVLLSLLPLALG. The propeptide occupies 16 to 105; sequence APAVEQRSEA…IEQDAVVTIN (90 aa). One can recognise an Inhibitor I9 domain in the interval 39–104; the sequence is KYIVKFKEGS…YIEQDAVVTI (66 aa). Residues 112–384 enclose the Peptidase S8 domain; sequence PWGLARISST…NLLAYNNYQA (273 aa). Thr-121 lines the Ca(2+) pocket. A disulfide bridge connects residues Cys-139 and Cys-228. Catalysis depends on charge relay system residues Asp-144 and His-174. Residues Pro-280, Val-282, and Asp-305 each coordinate Ca(2+). A disulfide bridge connects residues Cys-283 and Cys-354. Ser-329 serves as the catalytic Charge relay system. A Ca(2+)-binding site is contributed by Asp-365.

Belongs to the peptidase S8 family. Ca(2+) serves as cofactor.

The enzyme catalyses Hydrolysis of keratin, and of other proteins with subtilisin-like specificity. Hydrolyzes peptide amides.. In terms of biological role, hydrolyzes keratin at aromatic and hydrophobic residues. The protein is Proteinase K (PROK) of Parengyodontium album (Tritirachium album).